Consider the following 468-residue polypeptide: 3-isopropylmalate dehydratase large subunit (468 aa).

The [4Fe-4S] cluster site is built by Cys-347, Cys-407, and Cys-410.

The protein belongs to the aconitase/IPM isomerase family. LeuC type 1 subfamily. In terms of assembly, heterodimer of LeuC and LeuD. [4Fe-4S] cluster is required as a cofactor.

It carries out the reaction (2R,3S)-3-isopropylmalate = (2S)-2-isopropylmalate. It participates in amino-acid biosynthesis; L-leucine biosynthesis; L-leucine from 3-methyl-2-oxobutanoate: step 2/4. In terms of biological role, catalyzes the isomerization between 2-isopropylmalate and 3-isopropylmalate, via the formation of 2-isopropylmaleate. This Campylobacter jejuni subsp. jejuni serotype O:23/36 (strain 81-176) protein is 3-isopropylmalate dehydratase large subunit.